Consider the following 316-residue polypeptide: RNA interference defective protein 11 (316 aa).

Residues 183–218 (CYINFNCQTSKVMFGCGHVYCEQCLNSWNDKPCSVC) form an RING-type; degenerate zinc finger.

As to quaternary structure, interacts (via RING-type zinc finger domain) with rde-10.

In terms of biological role, in complex with rde-10, required in the endogenous and exogenous siRNA pathway for biogenesis and accumulation of secondary small interfering RNA (siRNA) intermediates, such as 22G-siRNAs derived from ergo-1 targets. The polypeptide is RNA interference defective protein 11 (Caenorhabditis elegans).